A 552-amino-acid chain; its full sequence is MAGUK p55 subfamily member 2 (552 aa).

2 L27 domains span residues 8–59 (SESA…EETK) and 60–118 (LEAV…YETP). Ser42 is modified (phosphoserine). The residue at position 117 (Thr117) is a Phosphothreonine. At Ser121 the chain carries Phosphoserine. Residues 140 to 219 (MVGIRKTAGE…SVILKILPSY (80 aa)) form the PDZ domain. The region spanning 225–293 (PRQVFVKCHF…PSQLLEEKRK (69 aa)) is the SH3 domain. A Guanylate kinase-like domain is found at 350 to 537 (RKTLVLIGAQ…TFRELQTAME (188 aa)).

It belongs to the MAGUK family. As to quaternary structure, can homomultimerise. Interacts with CACNG2. Interacts (via the SH3-Guanylate kinase-like sub-module) with DLG4/PSD95 and DLGAP1/GKAP. Interacts (via the PDZ domain) with CADM1 (via C-terminus). Interacts with KCNN2/SK2 (via N-terminal domain). Interacts with SRC. Phosphorylated by SRC. As to expression, expressed in hippocampal neurons.

The protein localises to the cell projection. The protein resides in the dendrite. Its subcellular location is the postsynaptic density. It is found in the cytoplasm. It localises to the cytoskeleton. The protein localises to the membrane. Its function is as follows. Postsynaptic MAGUK scaffold protein that links CADM1 cell adhesion molecules to core components of the postsynaptic density. In CA1 pyramidal neurons, required for synaptic KCNN2-containing channel function and long-term potentiation expression. Seems to negatively regulate SRC function in epithelial cells. The protein is MAGUK p55 subfamily member 2 of Rattus norvegicus (Rat).